The following is a 1178-amino-acid chain: Mediator of RNA polymerase II transcription subunit 14 (1178 aa).

A compositionally biased stretch (polar residues) spans 1–12 (MDNSVHNNSNTT). Disordered regions lie at residues 1-50 (MDNS…PITV) and 1064-1178 (LAGT…VVLD). Low complexity-rich tracts occupy residues 1074–1112 (PTQIQQPQQPSPHPQQAQVQEQRQQPQQQQQANPLQGAA) and 1119–1164 (HQLQ…AQQR).

The protein belongs to the Mediator complex subunit 14 family. As to quaternary structure, component of the Mediator complex.

The protein localises to the nucleus. Functionally, component of the Mediator complex, a coactivator involved in the regulated transcription of nearly all RNA polymerase II-dependent genes. Mediator functions as a bridge to convey information from gene-specific regulatory proteins to the basal RNA polymerase II transcription machinery. Mediator is recruited to promoters by direct interactions with regulatory proteins and serves as a scaffold for the assembly of a functional preinitiation complex with RNA polymerase II and the general transcription factors. This chain is Mediator of RNA polymerase II transcription subunit 14 (RGR1), found in Chaetomium globosum (strain ATCC 6205 / CBS 148.51 / DSM 1962 / NBRC 6347 / NRRL 1970) (Soil fungus).